Here is a 450-residue protein sequence, read N- to C-terminus: Bifunctional protein GlmU (450 aa).

The segment at 1–226 (MLAVAVLAAG…PDEVNGINNR (226 aa)) is pyrophosphorylase. Residues 7-10 (LAAG), Lys21, Gln73, and 78-79 (GT) contribute to the UDP-N-acetyl-alpha-D-glucosamine site. Mg(2+) is bound at residue Asp103. Gly140, Glu155, Asn170, and Asn224 together coordinate UDP-N-acetyl-alpha-D-glucosamine. Asn224 contributes to the Mg(2+) binding site. The linker stretch occupies residues 227–247 (QQLAQCETMLQERLRHHWMAE). Positions 248-450 (GVTFVDPASC…IKENWAGPQG (203 aa)) are N-acetyltransferase. 2 residues coordinate UDP-N-acetyl-alpha-D-glucosamine: Arg329 and Lys347. His359 acts as the Proton acceptor in catalysis. Tyr362 and Asn373 together coordinate UDP-N-acetyl-alpha-D-glucosamine. Residues Ala376, 382–383 (NY), Ala419, and Arg436 contribute to the acetyl-CoA site.

This sequence in the N-terminal section; belongs to the N-acetylglucosamine-1-phosphate uridyltransferase family. In the C-terminal section; belongs to the transferase hexapeptide repeat family. In terms of assembly, homotrimer. Mg(2+) serves as cofactor.

The protein resides in the cytoplasm. It catalyses the reaction alpha-D-glucosamine 1-phosphate + acetyl-CoA = N-acetyl-alpha-D-glucosamine 1-phosphate + CoA + H(+). The catalysed reaction is N-acetyl-alpha-D-glucosamine 1-phosphate + UTP + H(+) = UDP-N-acetyl-alpha-D-glucosamine + diphosphate. Its pathway is nucleotide-sugar biosynthesis; UDP-N-acetyl-alpha-D-glucosamine biosynthesis; N-acetyl-alpha-D-glucosamine 1-phosphate from alpha-D-glucosamine 6-phosphate (route II): step 2/2. It participates in nucleotide-sugar biosynthesis; UDP-N-acetyl-alpha-D-glucosamine biosynthesis; UDP-N-acetyl-alpha-D-glucosamine from N-acetyl-alpha-D-glucosamine 1-phosphate: step 1/1. It functions in the pathway bacterial outer membrane biogenesis; LPS lipid A biosynthesis. In terms of biological role, catalyzes the last two sequential reactions in the de novo biosynthetic pathway for UDP-N-acetylglucosamine (UDP-GlcNAc). The C-terminal domain catalyzes the transfer of acetyl group from acetyl coenzyme A to glucosamine-1-phosphate (GlcN-1-P) to produce N-acetylglucosamine-1-phosphate (GlcNAc-1-P), which is converted into UDP-GlcNAc by the transfer of uridine 5-monophosphate (from uridine 5-triphosphate), a reaction catalyzed by the N-terminal domain. The sequence is that of Bifunctional protein GlmU from Synechococcus sp. (strain RCC307).